A 481-amino-acid chain; its full sequence is 3-isopropylmalate dehydratase large subunit (481 aa).

Residues cysteine 357, cysteine 417, and cysteine 420 each contribute to the [4Fe-4S] cluster site.

Belongs to the aconitase/IPM isomerase family. LeuC type 1 subfamily. As to quaternary structure, heterodimer of LeuC and LeuD. It depends on [4Fe-4S] cluster as a cofactor.

It carries out the reaction (2R,3S)-3-isopropylmalate = (2S)-2-isopropylmalate. It functions in the pathway amino-acid biosynthesis; L-leucine biosynthesis; L-leucine from 3-methyl-2-oxobutanoate: step 2/4. Its function is as follows. Catalyzes the isomerization between 2-isopropylmalate and 3-isopropylmalate, via the formation of 2-isopropylmaleate. The polypeptide is 3-isopropylmalate dehydratase large subunit (Maricaulis maris (strain MCS10) (Caulobacter maris)).